The chain runs to 242 residues: DNA repair protein RecO (242 aa).

The protein belongs to the RecO family.

In terms of biological role, involved in DNA repair and RecF pathway recombination. The sequence is that of DNA repair protein RecO from Vibrio atlanticus (strain LGP32) (Vibrio splendidus (strain Mel32)).